We begin with the raw amino-acid sequence, 211 residues long: uncharacterized protein (211 aa).

This is an uncharacterized protein from Mycoplasma pneumoniae (strain ATCC 29342 / M129 / Subtype 1) (Mycoplasmoides pneumoniae).